The following is a 300-amino-acid chain: uncharacterized protein (300 aa).

A coiled-coil region spans residues L67–S179. A compositionally biased stretch (low complexity) spans S203–Q285. The tract at residues S203–L300 is disordered.

This is an uncharacterized protein from Staphylococcus epidermidis (strain ATCC 12228 / FDA PCI 1200).